The chain runs to 579 residues: Glutamine--tRNA ligase (579 aa).

Residues 41 to 51 carry the 'HIGH' region motif; it reads PEPNGYLHIGH. Residues 42 to 44 and 48 to 54 each bind ATP; these read EPN and HIGHAKA. 2 residues coordinate L-glutamine: Asp-74 and Tyr-218. ATP is bound by residues Thr-237, 285–286, and 293–295; these read RL and MSK. The 'KMSKS' region motif lies at 292–296; the sequence is VMSKR.

It belongs to the class-I aminoacyl-tRNA synthetase family. In terms of assembly, monomer.

Its subcellular location is the cytoplasm. It carries out the reaction tRNA(Gln) + L-glutamine + ATP = L-glutaminyl-tRNA(Gln) + AMP + diphosphate. This chain is Glutamine--tRNA ligase, found in Xanthomonas axonopodis pv. citri (strain 306).